The chain runs to 1005 residues: MTNSISGDQPTVTTFTSSTTSASGASGSLGASSVSTTANATVTQTANATNSAATSSIQTTGETVVNYTNSASAPTVTVSTSSSSTQATATSNKTSQAVAGKITSPDTSESSETSSTSSSDHIPSDYEPISTTENIYENIYESIDDSSTSGPENTSGGAAALNSLRGSSYSNYDDAAADYEPISTTENIYESIDDSSTSDPENTSGGAAALNSLRGSSYSNYDDAAADYEPISTTENIYENIYESIDDSSTSGPENTSGGAAALNSLRGSSYSNYDDAAADYEPISTTENIYESIDDSSTSDPENTSGGAAAALNSLRGSSYSNYDDAAADYEPISTTENIYESIDDSSTSDPENTSGGAAALNSLRGSSYSNYDDAAADYEPISTTENIYENIYESIDGSSTSDPENTSGGAAAALNSLRGSSYTTGPRNEGVFGPGPEGLPDMSLPSYDPTNKTSLLTFLSNPHVKSKMLENSGHFVFIDTDRSSFILVPNGNWDQVCSIKVQNGKTKEDLDIKDLENMCAKFCTGFNKFSGDWDSRVEPMMSAKAGVASGGNLPNTVIINNKFKTCVAYGPWNSREASSGYTPSAWRRGHQVNFGEIFEKANDFNKINWGTQAGPSSEDDGISFSNETPGAGPAAAPSPTPSSIPVINVNVNVGGTNVNIRDTNVNTTNTTPTTQSTDASTDTSDIDNINTNNQTDDINTTDKDSDGAGGVNGDISETESSSGDDSGSVSSSESDKNASVGNDGPAMKDILSAVRKHLDVVYPGDNGGSTEGPLQANQTLGDIVQDMETTGTSQETVVSPWKGSTSSTGSAGGSGSVQTLLPSPPPTPSTTTLRTGTGATTTSLMMGGPIKADIITTGGGGRIPGGGTLEKLLPRIRAHLDISFDGQGDLVSTEEPQLGSIVNKFRKETGSGGIVASVESAPGKPGSAQVLTGTGGDKGNLFQAAAAVTQALGNVAGKVNLAIQGQKLSSLVNDDGKGSVGRDLFQAATQTTQALSSLIDTVG.

Over residues methionine 1–proline 10 the composition is skewed to polar residues. Disordered regions lie at residues methionine 1–threonine 36, proline 74–proline 128, serine 191–arginine 214, serine 343–leucine 365, tryptophan 611–serine 645, asparagine 661–alanine 748, and threonine 792–methionine 847. 2 stretches are compositionally biased toward low complexity: residues threonine 11 to threonine 36 and proline 74 to histidine 121. Polar residues-rich tracts occupy residues serine 191 to glycine 205 and serine 343 to glycine 357. Composition is skewed to low complexity over residues asparagine 661–isoleucine 700, glycine 715–serine 734, and serine 831–leucine 846.

Belongs to the chlamydial CPn_0572/CT_456/TC_0741 family. In terms of processing, phosphorylated on a tyrosine on attachment to the host cell. Tyrosine phosphorylation is temporally and spatially associated with recruitment of actin to the site of chlamydial entry. Phosphorylated Tarp seems to remain cytoplasmically exposed on the inclusion membrane at one side of internalized elementary bodies for several hours after entry.

It localises to the secreted. Functionally, appears to initiate or participate in signaling events that regulate the actin recruitment, which ultimately leads to internalization. The sequence is that of Translocated actin-recruiting phosphoprotein (tarP) from Chlamydia trachomatis serovar L2 (strain ATCC VR-902B / DSM 19102 / 434/Bu).